A 181-amino-acid chain; its full sequence is Peptide methionine sulfoxide reductase MsrA (181 aa).

Residue Cys14 is part of the active site.

The protein belongs to the MsrA Met sulfoxide reductase family.

The catalysed reaction is L-methionyl-[protein] + [thioredoxin]-disulfide + H2O = L-methionyl-(S)-S-oxide-[protein] + [thioredoxin]-dithiol. The enzyme catalyses [thioredoxin]-disulfide + L-methionine + H2O = L-methionine (S)-S-oxide + [thioredoxin]-dithiol. Its function is as follows. Has an important function as a repair enzyme for proteins that have been inactivated by oxidation. Catalyzes the reversible oxidation-reduction of methionine sulfoxide in proteins to methionine. In Bacillus licheniformis (strain ATCC 14580 / DSM 13 / JCM 2505 / CCUG 7422 / NBRC 12200 / NCIMB 9375 / NCTC 10341 / NRRL NRS-1264 / Gibson 46), this protein is Peptide methionine sulfoxide reductase MsrA.